The primary structure comprises 436 residues: Trigger factor (436 aa).

The PPIase FKBP-type domain occupies 161 to 246 (GDQLNIDFVG…VNSVSEAELP (86 aa)).

This sequence belongs to the FKBP-type PPIase family. Tig subfamily.

It is found in the cytoplasm. It carries out the reaction [protein]-peptidylproline (omega=180) = [protein]-peptidylproline (omega=0). Functionally, involved in protein export. Acts as a chaperone by maintaining the newly synthesized protein in an open conformation. Functions as a peptidyl-prolyl cis-trans isomerase. This is Trigger factor from Azotobacter vinelandii (strain DJ / ATCC BAA-1303).